A 182-amino-acid chain; its full sequence is FDRYNQILDEHNMNLREAEQILRYLKVKSVKDEETKKIKQEEAEMKKKIEGEASRKKLELEQRRTEQQPSGDANDMFGSTDDLMNLDLDNFRTDFLDFGETSERPQNDDMMKDIFEMKTADNSEGSAMDSLTDLNLDFLDQPAQAGPEPAAPAQEDDAGLMPTDQMENLFSQFDELVNSGDY.

Residues 1–68 (FDRYNQILDE…ELEQRRTEQQ (68 aa)) are a coiled coil. The segment covering 32–66 (DEETKKIKQEEAEMKKKIEGEASRKKLELEQRRTE) has biased composition (basic and acidic residues). 2 disordered regions span residues 32-81 (DEET…GSTD) and 140-160 (DQPA…DAGL). Residues 140-153 (DQPAQAGPEPAAPA) are compositionally biased toward low complexity.

It is found in the cytoplasm. The protein resides in the cytoskeleton. The protein is Tropomyosin-like protein of Pichia angusta (Yeast).